A 285-amino-acid chain; its full sequence is LGKEAAVKAIKEWGQPKSKITHLIFCTTSGVDMPGADYQLTKLLGLRPYVKRYMMYQQGCFAGGTVLRLAKDLAENNKGARVLVVCSEVTAVTFRGPSDTHLDSLVGQALFGDGAAALIVGSDPIPEIEKPIFEMVWTAQTIAPDSEGAIDGHLREAGLTFHLLKDVPGIVSKNIDKALVEAFQPLNISDYNSIFWIAHPGGPAILDQVEQKLGLKPEKMKATREVLSEYGNMSSACVLFILDEMRKKSAQQGLKTTGEGLDWGVLFGFGPGLTIETVVLHSVAL.

Cys60 is a catalytic residue.

This sequence belongs to the thiolase-like superfamily. Chalcone/stilbene synthases family.

It catalyses the reaction (E)-4-coumaroyl-CoA + 3 malonyl-CoA + 3 H(+) = 2',4,4',6'-tetrahydroxychalcone + 3 CO2 + 4 CoA. Its pathway is secondary metabolite biosynthesis; flavonoid biosynthesis. The primary product of this enzyme is 4,2',4',6'-tetrahydroxychalcone (also termed naringenin-chalcone or chalcone) which can under specific conditions spontaneously isomerize into naringenin. The protein is Chalcone synthase 6-4 (CHS6-4) of Medicago sativa (Alfalfa).